Consider the following 347-residue polypeptide: Protein RecA (347 aa).

Residue G67–T74 participates in ATP binding. Residues A327–P347 are disordered. Positions E337–P347 are enriched in basic and acidic residues.

It belongs to the RecA family.

It localises to the cytoplasm. In terms of biological role, can catalyze the hydrolysis of ATP in the presence of single-stranded DNA, the ATP-dependent uptake of single-stranded DNA by duplex DNA, and the ATP-dependent hybridization of homologous single-stranded DNAs. It interacts with LexA causing its activation and leading to its autocatalytic cleavage. This is Protein RecA from Desulforapulum autotrophicum (strain ATCC 43914 / DSM 3382 / VKM B-1955 / HRM2) (Desulfobacterium autotrophicum).